The primary structure comprises 333 residues: MKDTLTLLSRVSAHPDSRCWFLAWNPSGTLLASCGGDRTIRIWGKDGDNWVCKSVLGEGHQRTVRKVSWSPCGNYLASASFDATTCIWMKKKEEFECITTLEGHENEVKSVAWAPSGSLLATCSRDKSVWVWEVDEEEEYECVSVLNSHTQDVKHVVWHPNQELLASASYDDSVKLYREEEDDWVCCATLEGHTSTVWSLAFDQTGEQLATCSDDKTVRIWRQLGTGEQGSKSDPNWKCVCTLTGYHTRTVYDVNWNHLTGAIATACGDDAVRIFEEDPGSDPLQPTFSLTAHMPRAHTQDVNCVTWHPKEPNLLASCSDDGEMAFWRYQKPE.

WD repeat units lie at residues 14–53 (HPDS…WVCK), 59–98 (GHQR…FECI), 103–142 (GHEN…EYEC), 148–187 (SHTQ…WVCC), 192–231 (GHTS…EQGS), 246–285 (YHTR…DPLQ), and 297–333 (AHTQ…QKPE).

Belongs to the WD repeat CIA1 family. In terms of assembly, component of the CIA complex.

Key component of the cytosolic iron-sulfur protein assembly (CIA) complex, a multiprotein complex that mediates the incorporation of iron-sulfur cluster into extramitochondrial Fe/S proteins. This is Probable cytosolic iron-sulfur protein assembly protein ciao1 (ciao1) from Xenopus tropicalis (Western clawed frog).